A 450-amino-acid polypeptide reads, in one-letter code: Na(+)/H(+) antiporter NhaA 1 (450 aa).

Helical transmembrane passes span 35–55 (SSLFLLFATIIALWWANSDYA), 79–99 (LKHIINDGLMVIFFFLLGLEI), 117–137 (LIICAMGGMVCPALIYSGFNW), 143–163 (IGWGIPMATDTAFALGVLTMV), 173–193 (AFIVGLAIVDDVGAILVIAIF), 198–218 (ISLMHLLSACALIGFLGVANY), 224–244 (PLFYFIIGVAAWWAMLKSGVH), 320–340 (LPVVLFILPLFALANAGVVIN), 356–376 (IISGLILGKLIGISGACWFAL), 392–412 (VIGASLIAGIGFTMSTFIATL), and 423–443 (VAKTSILLASVLTAILGLLYL).

It belongs to the NhaA Na(+)/H(+) (TC 2.A.33) antiporter family.

The protein resides in the cell inner membrane. The catalysed reaction is Na(+)(in) + 2 H(+)(out) = Na(+)(out) + 2 H(+)(in). In terms of biological role, na(+)/H(+) antiporter that extrudes sodium in exchange for external protons. This chain is Na(+)/H(+) antiporter NhaA 1, found in Shewanella denitrificans (strain OS217 / ATCC BAA-1090 / DSM 15013).